A 235-amino-acid polypeptide reads, in one-letter code: uncharacterized protein (235 aa).

Helical transmembrane passes span 167–187 and 190–210; these read AFKL…LNEL and LFAY…LLLW.

The protein resides in the membrane. This is an uncharacterized protein from Saccharomyces cerevisiae (strain ATCC 204508 / S288c) (Baker's yeast).